A 578-amino-acid chain; its full sequence is Avenacosidase 2 (578 aa).

Residues 1-57 (MALLCSALSNSTHPSFRSHIAGANSENLWHLSAHPAQKSKRRCNLTLSSRAAARISS) constitute a chloroplast transit peptide. A beta-D-glucoside contacts are provided by residues glutamine 89, histidine 193, and 238–239 (NE). Catalysis depends on glutamate 239, which acts as the Proton donor. A disulfide bridge connects residues cysteine 258 and cysteine 264. Residues tyrosine 381, glutamate 454, tryptophan 504, 511–512 (EW), and phenylalanine 520 contribute to the a beta-D-glucoside site. Glutamate 454 serves as the catalytic Nucleophile.

Belongs to the glycosyl hydrolase 1 family. In terms of assembly, heteromultimer with P60A in a 1:1 stoichiometry. Aggregates to form the fibrillar stromacentre.

It localises to the plastid. Its subcellular location is the chloroplast stroma. The enzyme catalyses avenacoside B + H2O = 26-desgluco-avenacoside B + D-glucose. Its function is as follows. Beta-glucosidase acting as a preformed defense system. Hydrolyzes the bisdesmosides avenacosides A and B to 26-desgluco-avenacosides exhibiting fungicidal activity. Can use beta-fucoside &gt; beta-glucoside &gt; beta-galactoside &gt; beta-xyloside as substrates, but not alpha-glycosides, beta-thioglucosides and disaccharides. The polypeptide is Avenacosidase 2 (P60B) (Avena sativa (Oat)).